The sequence spans 101 residues: RNA-3 uncharacterized 11.6 kDa protein (101 aa).

In Beet necrotic yellow vein mosaic virus (isolate Yugoslavia/G1) (BNYVV), this protein is RNA-3 uncharacterized 11.6 kDa protein.